The following is a 285-amino-acid chain: ATP synthase subunit a (285 aa).

A run of 6 helical transmembrane segments spans residues 41-61 (TWHV…LWIF), 102-122 (IAPL…MDLI), 164-184 (LGVF…GGFI), 197-217 (VFVQ…ALVS), 226-246 (LFGN…IGFM), and 252-272 (FVWA…FMML).

This sequence belongs to the ATPase A chain family. As to quaternary structure, F-type ATPases have 2 components, CF(1) - the catalytic core - and CF(0) - the membrane proton channel. CF(1) has five subunits: alpha(3), beta(3), gamma(1), delta(1), epsilon(1). CF(0) has three main subunits: a(1), b(2) and c(9-12). The alpha and beta chains form an alternating ring which encloses part of the gamma chain. CF(1) is attached to CF(0) by a central stalk formed by the gamma and epsilon chains, while a peripheral stalk is formed by the delta and b chains.

Its subcellular location is the cell inner membrane. Functionally, key component of the proton channel; it plays a direct role in the translocation of protons across the membrane. This Pseudoalteromonas translucida (strain TAC 125) protein is ATP synthase subunit a.